A 248-amino-acid chain; its full sequence is UPF0651 protein YPL107W, mitochondrial (248 aa).

The N-terminal 26 residues, 1 to 26 (MIRNQGWSLLYRIYPVRRFTRYSRVD), are a transit peptide targeting the mitochondrion. The region spanning 69–116 (KKIAGVQVPAKPQEPDNCCMSGCVNCVWEIYSEDLRDWKHRRKEAAEK) is the Oxidoreductase-like domain.

It belongs to the UPF0651 family.

The protein resides in the mitochondrion. The chain is UPF0651 protein YPL107W, mitochondrial from Saccharomyces cerevisiae (strain ATCC 204508 / S288c) (Baker's yeast).